We begin with the raw amino-acid sequence, 585 residues long: Zinc finger protein C11D3.17 (585 aa).

2 C2H2-type zinc fingers span residues 31–53 (FPCD…KACH) and 59–82 (IPCP…QRFH). T553 bears the Phosphothreonine mark.

It localises to the nucleus. This is Zinc finger protein C11D3.17 from Schizosaccharomyces pombe (strain 972 / ATCC 24843) (Fission yeast).